We begin with the raw amino-acid sequence, 367 residues long: Phosphoribosylaminoimidazole-succinocarboxamide synthase (367 aa).

This sequence belongs to the SAICAR synthetase family.

The catalysed reaction is 5-amino-1-(5-phospho-D-ribosyl)imidazole-4-carboxylate + L-aspartate + ATP = (2S)-2-[5-amino-1-(5-phospho-beta-D-ribosyl)imidazole-4-carboxamido]succinate + ADP + phosphate + 2 H(+). The protein operates within purine metabolism; IMP biosynthesis via de novo pathway; 5-amino-1-(5-phospho-D-ribosyl)imidazole-4-carboxamide from 5-amino-1-(5-phospho-D-ribosyl)imidazole-4-carboxylate: step 1/2. In Shewanella baltica (strain OS185), this protein is Phosphoribosylaminoimidazole-succinocarboxamide synthase.